The sequence spans 150 residues: Allograft inflammatory factor 1-like (150 aa).

Position 2 is an N-acetylserine (serine 2). A Phosphoserine modification is found at serine 2. Positions 47 to 82 (EKLAAFKEKYMEFDLNNEGEIDLMSLKRMMEKLGVP) constitute an EF-hand 1 domain. Residues aspartate 60, asparagine 62, glutamate 64, and glutamate 66 each coordinate Ca(2+). An EF-hand 2; degenerate domain is found at 83–117 (KTHLEMKKMISEVTGGVSDTISYRDFVNMMLGKRS). Positions 129 to 150 (KANESSPKPAGPPPERDIASLP) are disordered. Serine 134 carries the post-translational modification Phosphoserine.

In terms of assembly, homodimer (Potential). Monomer.

It is found in the cytoplasm. The protein resides in the cytoskeleton. It localises to the cell projection. Its subcellular location is the ruffle membrane. Its function is as follows. Actin-binding protein that promotes actin bundling. May neither bind calcium nor depend on calcium for function. In Mus musculus (Mouse), this protein is Allograft inflammatory factor 1-like (Aif1l).